The sequence spans 282 residues: Complement component 1 Q subcomponent-binding protein, mitochondrial (282 aa).

The transit peptide at 1–73 (MLPLLRCVPR…PCACGCGCGS (73 aa)) directs the protein to the mitochondrion. The interval 76–93 (TDGDKAFVDFLSDEIKEE) is C1q binding. S87 carries the phosphoserine modification. N6-acetyllysine is present on K91. Positions 138-164 (SIPPTFDGEEEPSQGQKVEEQEPELTS) are disordered. An interaction with MAVS region spans residues 168–213 (FVVEVIKNDDGKKALVLDCHYPEDEVGQEDEAESDIFSIREVSFQS). At Y188 the chain carries Phosphotyrosine. S201 and S205 each carry phosphoserine. At T214 the chain carries Phosphothreonine.

It belongs to the MAM33 family. In terms of assembly, homotrimer; three monomers form a donut-shaped structure with an unusually asymmetric charge distribution on the surface. Interacts with CDK13, HRK, VTN, NFYB, ADRA1B, FOXC1, DDX21, DDX50, NCL, SRSF1, SRSF9 and CDKN2A isoform smARF. Interacts with CD93; the association may represent a cell surface C1q receptor. Interacts with KRT1; the association represents a cell surface kininogen receptor. Interacts with CD209; the interaction is indicative for a C1q:C1QBP:CD209 signaling complex. Interacts with FBL and RRP1; the respective interactions with C1QBP are competitive. Probably associates with the mitoribosome. Interacts with MAVS; the interaction occurs upon viral transfection. Interacts with PPIF. Interacts with U2AF1L4. Interacts with PLEKHN1. Interacts with VGF-derived peptide TLQP-21. Interacts with POLGARF which is produced from an alternative reading frame of the POLG gene; the interaction results in nucleolar localization of C1QBP, probably due to prevention of C1QBP maturation and redirection from mitochondria to nucleoli. Interacts with MRE11 and RAD50; forming the MRC (MRE11-RAD50-C1QBP) complex that inhibits the activity of MRE11. (Microbial infection) Interacts with Rubella virus capsid protein; the interaction occurs in mitochondria. Interacts with Rubella virus protease/methyltransferase p150. As to quaternary structure, (Microbial infection) Interacts with Staphylococcus aureus protein A/spa. In terms of assembly, (Microbial infection) Interacts with Staphylococcus aureus protein A/spa, HIV-1 Tat and HCV core protein. (Microbial infection) Interacts with HIV-1 Tat and HCV core protein. As to quaternary structure, (Microbial infection) Interacts with L.monocytogenes internalin B. In terms of assembly, (Microbial infection) Interacts with Epstein-Barr virus EBNA1. In terms of tissue distribution, expressed on cell surface of peripheral blood cells (at protein level); Surface expression is reported for macrophages and monocyte-derived dendritic cells.

Its subcellular location is the mitochondrion matrix. The protein resides in the nucleus. It is found in the nucleolus. It localises to the cell membrane. The protein localises to the secreted. Its subcellular location is the cytoplasm. Its function is as follows. Multifunctional and multicompartmental protein involved in inflammation and infection processes, ribosome biogenesis, protein synthesis in mitochondria, regulation of apoptosis, transcriptional regulation and pre-mRNA splicing. At the cell surface is thought to act as an endothelial receptor for plasma proteins of the complement and kallikrein-kinin cascades. Putative receptor for C1q; specifically binds to the globular 'heads' of C1q thus inhibiting C1; may perform the receptor function through a complex with C1qR/CD93. In complex with cytokeratin-1/KRT1 is a high affinity receptor for kininogen-1/HMWK. Can also bind other plasma proteins, such as coagulation factor XII leading to its autoactivation. May function to bind initially fluid kininogen-1 to the cell membrane. The secreted form may enhance both extrinsic and intrinsic coagulation pathways. It is postulated that the cell surface form requires docking with transmembrane proteins for downstream signaling which might be specific for a cell-type or response. By acting as C1q receptor is involved in chemotaxis of immature dendritic cells and neutrophils and is proposed to signal through CD209/DC-SIGN on immature dendritic cells, through integrin alpha-4/beta-1 during trophoblast invasion of the decidua, and through integrin beta-1 during endothelial cell adhesion and spreading. Signaling involved in inhibition of innate immune response is implicating the PI3K-AKT/PKB pathway. Required for protein synthesis in mitochondria. In mitochondrial translation may be involved in formation of functional 55S mitoribosomes; the function seems to involve its RNA-binding activity. Acts as a RNA modification reader, which specifically recognizes and binds mitochondrial RNAs modified by C5-methylcytosine (m5C) in response to stress, and promotes recruitment of the mitochondrial degradosome complex, leading to their degradation. May be involved in the nucleolar ribosome maturation process; the function may involve the exchange of FBL for RRP1 in the association with pre-ribosome particles. Involved in regulation of RNA splicing by inhibiting the RNA-binding capacity of SRSF1 and its phosphorylation. Is required for the nuclear translocation of splicing factor U2AF1L4. Involved in regulation of CDKN2A- and HRK-mediated apoptosis. Stabilizes mitochondrial CDKN2A isoform smARF. May be involved in regulation of FOXC1 transcriptional activity and NFY/CCAAT-binding factor complex-mediated transcription. May play a role in antibacterial defense as it can bind to cell surface hyaluronan and inhibit Streptococcus pneumoniae hyaluronate lyase. May be involved in modulation of the immune response; ligation by HCV core protein is resulting in suppression of interleukin-12 production in monocyte-derived dendritic cells. Involved in regulation of antiviral response by inhibiting RIGI- and IFIH1-mediated signaling pathways probably involving its association with MAVS after viral infection. Acts as a regulator of DNA repair via homologous recombination by inhibiting the activity of MRE11: interacts with unphosphorylated MRE11 and RAD50 in absence of DNA damage, preventing formation and activity of the MRN complex. Following DNA damage, dissociates from phosphorylated MRE11, allowing formation of the MRN complex. (Microbial infection) Involved in HIV-1 replication, presumably by contributing to splicing of viral RNA. In terms of biological role, (Microbial infection) In infection processes acts as an attachment site for microbial proteins, including Listeria monocytogenes internalin B (InlB) and Staphylococcus aureus protein A. Functionally, (Microbial infection) Involved in replication of Rubella virus. The protein is Complement component 1 Q subcomponent-binding protein, mitochondrial (C1QBP) of Homo sapiens (Human).